Reading from the N-terminus, the 102-residue chain is Sulfur globule protein CV3 (102 aa).

The first 25 residues, 1–25 (MTMKRLLLVSTLAGASALATLPANA), serve as a signal peptide directing secretion.

In terms of assembly, the protein envelope of the sulfur globules is composed of the three different proteins CV1, CV2 and CV3.

Functionally, structural protein of the sulfur globules, which are intracellular globules that serve for sulfur storage in purple sulfur bacteria. This is Sulfur globule protein CV3 (sgpC) from Allochromatium vinosum (strain ATCC 17899 / DSM 180 / NBRC 103801 / NCIMB 10441 / D) (Chromatium vinosum).